The chain runs to 228 residues: UPF0758 protein MW1604 (228 aa).

The MPN domain maps to 102–224 (KITQPSDVAD…FTSLVEAGYF (123 aa)). Zn(2+) contacts are provided by H173, H175, and D186. A JAMM motif motif is present at residues 173–186 (HNHPSGDVTPSQED).

This sequence belongs to the UPF0758 family.

In Staphylococcus aureus (strain MW2), this protein is UPF0758 protein MW1604.